Here is a 320-residue protein sequence, read N- to C-terminus: NAC domain-containing protein 18 (320 aa).

Residues 1–22 are disordered; sequence MESTDSSGGPPPPQPNLPPGFR. Residues 9-18 show a composition bias toward pro residues; that stretch reads GPPPPQPNLP. Residues 17–177 form the NAC domain; it reads LPPGFRFHPT…DWVLCRIYKK (161 aa). A DNA-binding region spans residues 118–183; that stretch reads VGVKKALVFY…IYKKNNSTAS (66 aa).

As to expression, restricted primarily to the region of the embryo including the SAM. Expressed in the outer integument, but seems not expressed in the embryo at the torpedo stage.

The protein resides in the nucleus. Functionally, may encode a transcription factor involved in the elaboration of shoot apical meristems (SAM). Together with NAC056/NARS1, regulates embryogenesis by regulating the development and degeneration of ovule integuments, a process required for intertissue communication between the embryo and the maternal integument. This chain is NAC domain-containing protein 18 (NAC018), found in Arabidopsis thaliana (Mouse-ear cress).